The sequence spans 330 residues: Fructose-1,6-bisphosphatase class 1 (330 aa).

4 residues coordinate Mg(2+): E84, D103, L105, and D106. Substrate is bound by residues 106–109 (DGSS), N196, and K262. Residue E268 coordinates Mg(2+).

The protein belongs to the FBPase class 1 family. As to quaternary structure, homotetramer. Mg(2+) is required as a cofactor.

It is found in the cytoplasm. The enzyme catalyses beta-D-fructose 1,6-bisphosphate + H2O = beta-D-fructose 6-phosphate + phosphate. The protein operates within carbohydrate biosynthesis; gluconeogenesis. The protein is Fructose-1,6-bisphosphatase class 1 of Shewanella frigidimarina (strain NCIMB 400).